The sequence spans 247 residues: 2,3-bisphosphoglycerate-dependent phosphoglycerate mutase (247 aa).

Substrate-binding positions include 8 to 15 (RHGESTWN), 21 to 22 (TG), R60, 87 to 90 (ERHY), K98, 114 to 115 (RR), and 183 to 184 (GN). H9 acts as the Tele-phosphohistidine intermediate in catalysis. Residue E87 is the Proton donor/acceptor of the active site.

It belongs to the phosphoglycerate mutase family. BPG-dependent PGAM subfamily. Homodimer.

The enzyme catalyses (2R)-2-phosphoglycerate = (2R)-3-phosphoglycerate. Its pathway is carbohydrate degradation; glycolysis; pyruvate from D-glyceraldehyde 3-phosphate: step 3/5. Functionally, catalyzes the interconversion of 2-phosphoglycerate and 3-phosphoglycerate. The polypeptide is 2,3-bisphosphoglycerate-dependent phosphoglycerate mutase (Leptothrix cholodnii (strain ATCC 51168 / LMG 8142 / SP-6) (Leptothrix discophora (strain SP-6))).